A 549-amino-acid polypeptide reads, in one-letter code: Glucose-6-phosphate isomerase (549 aa).

Glutamate 353 serves as the catalytic Proton donor. Active-site residues include histidine 384 and lysine 510.

It belongs to the GPI family.

Its subcellular location is the cytoplasm. The enzyme catalyses alpha-D-glucose 6-phosphate = beta-D-fructose 6-phosphate. The protein operates within carbohydrate biosynthesis; gluconeogenesis. It functions in the pathway carbohydrate degradation; glycolysis; D-glyceraldehyde 3-phosphate and glycerone phosphate from D-glucose: step 2/4. In terms of biological role, catalyzes the reversible isomerization of glucose-6-phosphate to fructose-6-phosphate. The protein is Glucose-6-phosphate isomerase of Mycolicibacterium smegmatis (Mycobacterium smegmatis).